The primary structure comprises 219 residues: Elongation factor Ts (219 aa).

The interval 82–85 is involved in Mg(2+) ion dislocation from EF-Tu; it reads TDFV.

This sequence belongs to the EF-Ts family.

It localises to the cytoplasm. Associates with the EF-Tu.GDP complex and induces the exchange of GDP to GTP. It remains bound to the aminoacyl-tRNA.EF-Tu.GTP complex up to the GTP hydrolysis stage on the ribosome. The protein is Elongation factor Ts of Anaeromyxobacter dehalogenans (strain 2CP-C).